The chain runs to 1087 residues: Synaptopodin-2 (1087 aa).

A PDZ domain is found at 6–88; that stretch reads FICISMTGGA…SLHLLVKRPS (83 aa). Disordered stretches follow at residues 24 to 52, 88 to 112, and 207 to 272; these read GKEE…EGDE, SSGT…HEGP, and GPIV…AGLP. Residues 101-112 show a composition bias toward basic and acidic residues; sequence TTNHQHLTHEGP. Composition is skewed to polar residues over residues 207–230 and 246–255; these read GPIV…SQLE and TSLTSSTSSG. Phosphoserine is present on residues serine 300, serine 319, and serine 320. The tract at residues 320–359 is disordered; the sequence is SEGTEHGEDQRSGKDQSRPHKHRARHARLRRSESLSEKQV. The span at 322-337 shows a compositional bias: basic and acidic residues; it reads GTEHGEDQRSGKDQSR. Position 323 is a phosphothreonine (threonine 323). Residues 338-348 show a composition bias toward basic residues; it reads PHKHRARHARL. A compositionally biased stretch (basic and acidic residues) spans 349 to 359; the sequence is RRSESLSEKQV. The short motif at 388–396 is the Nuclear localization signal element; the sequence is KKRRRRARK. A phosphoserine mark is found at serine 540, serine 541, serine 543, and serine 546. Residues 551-557 are interaction with YWHAB; sequence RSLASVP. Residue serine 555 is modified to Phosphoserine; by PKA. Disordered stretches follow at residues 581-817 and 832-863; these read AKPF…ALNL and NYTP…GMSG. Serine 596 carries the post-translational modification Phosphoserine. The interaction with YWHAB stretch occupies residues 599 to 804; the sequence is RSVTSPISDF…AVSSIKIAQP (206 aa). Threonine 602 is modified (phosphothreonine; by PKA and CaMK2). Position 603 is a phosphoserine (serine 603). Composition is skewed to pro residues over residues 609–622 and 636–647; these read PAPP…PPPE and AQPPPWPQPAPW. Residues 611-614 carry the PPPY motif motif; the sequence is PPPY. Tyrosine 614 bears the Phosphotyrosine mark. Serine 618 is modified (phosphoserine). The segment at 656–796 is F-actin binding; sequence SEQIASRDER…PPNPPQVTAV (141 aa). The F-actin bundling activity stretch occupies residues 656–909; the sequence is SEQIASRDER…LPASWKYSSN (254 aa). Interaction with ACTN2 regions lie at residues 656 to 917 and 894 to 1087; these read SEQI…PPVA and QSPT…VVEE. Phosphoserine is present on residues serine 697 and serine 719. The segment at 740–893 is actin binding; the sequence is AKQKTPPPVA…DTVQAHTVRA (154 aa). The residue at position 744 (threonine 744) is a Phosphothreonine. Residues 751–777 are compositionally biased toward low complexity; that stretch reads KPAVKSPSSSQPVAPVSPVWSPGVAPA. A phosphoserine mark is found at serine 767 and serine 771. A compositionally biased stretch (polar residues) spans 781-797; the sequence is AFSTSNPPNPPQVTAVS. Positions 803–1087 are interaction with FLNC; that stretch reads QPAAPPARPA…QVWKPSVVEE (285 aa). Serine 895, serine 899, and serine 903 each carry phosphoserine. 3 disordered regions span residues 930–952, 970–1012, and 1037–1060; these read AIKS…KKPL, FTFQ…PTNA, and PVSA…STSY. The tract at residues 993 to 1012 is interaction with ZYX; the sequence is PAMKQALPPRQANVGSPTNA. 2 positions are modified to phosphoserine: serine 1008 and serine 1050. Residues 1037–1051 show a composition bias toward low complexity; the sequence is PVSASPVPVSVPTSP.

Belongs to the synaptopodin family. In terms of assembly, may self-associate in muscle cells under oxidative stress. Binds F-actin. Interacts with ACTN2; ACTN2 is proposed to anchor SYOP2 at Z lines in mature myocytes. Interacts with AKAP6, PPP3CA and CAMK2A. Interacts (phosphorylated form) with YWHAB; YWHAB competes with ACTN2 for interaction with SYNPO2. Interacts with KPNA2; mediating nuclear import of SYNOP2; dependent on interaction with YWHAB. Interacts with IPO13; may be implicated in SYNOP2 nuclear import. Interacts with ZYX, FLNC, ILK. Interacts with BAG3 (via WW 1 domain). May associate with the CASA complex consisting of HSPA8, HSPB8 and BAG3. Interacts with VPS18. Post-translationally, phosphorylated by PKA, and by CaMK2 at multiple sites. Dephosphorylated by calcineurin at Ser-555 and Thr-602; abrogating interaction with YWHAB and impairing nuclear import. In terms of tissue distribution, expressed in skeletal muscle, heart, colon, stomach, uterus and lung. Expression is restricted to muscle cell layers in colon, uterus and stomach.

The protein resides in the nucleus. Its subcellular location is the cytoplasm. The protein localises to the myofibril. It localises to the sarcomere. It is found in the z line. The protein resides in the cell junction. Its subcellular location is the focal adhesion. Its function is as follows. Has an actin-binding and actin-bundling activity. Can induce the formation of F-actin networks. At the sarcomeric Z lines is proposed to act as adapter protein that links nascent myofibers to the sarcolemma via ZYX and may play a role in early assembly and stabilization of the Z lines. Involved in autophagosome formation. May play a role in chaperone-assisted selective autophagy (CASA) involved in Z lines maintenance in striated muscle under mechanical tension; may link the client-processing CASA chaperone machinery to a membrane-tethering and fusion complex providing autophagosome membranes. Involved in regulation of cell migration. May be a tumor suppressor. In Mus musculus (Mouse), this protein is Synaptopodin-2 (Synpo2).